A 488-amino-acid polypeptide reads, in one-letter code: Glutamate synthase [NADPH] small chain (488 aa).

Residues 38–69 (ESLRQQATRCMDCGIPFCHNGCPLGNLIPEWN) form the 4Fe-4S ferredoxin-type domain.

[4Fe-4S] cluster serves as cofactor.

The catalysed reaction is 2 L-glutamate + NADP(+) = L-glutamine + 2-oxoglutarate + NADPH + H(+). It functions in the pathway amino-acid biosynthesis; L-glutamate biosynthesis via GLT pathway; L-glutamate from 2-oxoglutarate and L-glutamine (NADP(+) route): step 1/1. The sequence is that of Glutamate synthase [NADPH] small chain (gltD) from Mycobacterium tuberculosis (strain CDC 1551 / Oshkosh).